Reading from the N-terminus, the 2181-residue chain is Genome polyprotein (2181 aa).

Gly-80 carries N-myristoyl glycine; by host lipidation. 2 interaction with host receptor ANTXR1 regions span residues 316 to 337 and 761 to 772; these read DYRT…PPNW and RFGLYANPSGSG. The region spanning 1165–1333 is the SF3 helicase domain; it reads LGKTNLAQSL…YKKHTRLNFD (169 aa). An ATP-binding site is contributed by 1197 to 1204; the sequence is GKPGCGKS. A disordered region spans residues 1472–1500; the sequence is EETESEGSVKAPRSENAYDGPKKNSKPPG. Tyr-1489 carries the post-translational modification O-(5'-phospho-RNA)-tyrosine. The Peptidase C3 domain occupies 1511 to 1704; that stretch reads NVDMGFEAAV…AGTYISKLGL (194 aa). His-1556 (for protease 3C activity and deubiquitinase activity) is an active-site residue. The active-site For protease 3C activity is the Asp-1592. Cys-1668 serves as the catalytic For protease 3C activity and deubiquitinase activity. The RdRp catalytic domain occupies 1950 to 2068; it reads KNTYDVDYSA…GTDYDLDFNE (119 aa). Active-site for RdRp activity residues include Asp-1956 and Asp-2054.

As to quaternary structure, interacts with host entry receptor ANTRX1. In terms of assembly, interacts with host IRF3; this interaction is involved in the suppression of IRF3 and IRF7 expression and phosphorylation by the virus. Interacts with host IRF7; this interaction is involved in the suppression of IRF3 and IRF7 expression and phosphorylation by the virus. Interacts with host MAVS; this interaction allows the cleavage of MAVS and subsequent suppression of host immunity. Interacts with host TRIF; this interaction allows the cleavage of TRIF and subsequent suppression of host immunity. Interacts with host TANK; this interaction allows the cleavage of TANK and subsequent suppression of host immunity. Interacts with host RIGI. Interacts with host TBK1. Interacts with host TRAF3. Specific enzymatic cleavages by the viral protease in vivo yield a variety of precursors and mature proteins. The polyprotein seems to be cotranslationally cleaved at the 2A/2B junction by a ribosomal skip from one codon to the next without formation of a peptide bond. This process would release the P1-2A peptide from the translational complex. In terms of processing, during virion maturation, immature virions are rendered infectious following cleavage of VP0 into VP4 and VP2. This maturation seems to be an autocatalytic event triggered by the presence of RNA in the capsid and is followed by a conformational change of the particle. Post-translationally, myristoylation is required during RNA encapsidation and formation of the mature virus particle. Uridylylated by the polymerase and is covalently linked to the 5'-end of genomic RNA. This uridylylated form acts as a nucleotide-peptide primer for the polymerase.

It localises to the virion. The protein localises to the host cytoplasm. It is found in the host nucleus. Its subcellular location is the host nucleolus. The protein resides in the host cytoplasmic vesicle membrane. The catalysed reaction is RNA(n) + a ribonucleoside 5'-triphosphate = RNA(n+1) + diphosphate. It catalyses the reaction Selective cleavage of Gln-|-Gly bond in the poliovirus polyprotein. In other picornavirus reactions Glu may be substituted for Gln, and Ser or Thr for Gly.. The enzyme catalyses Thiol-dependent hydrolysis of ester, thioester, amide, peptide and isopeptide bonds formed by the C-terminal Gly of ubiquitin (a 76-residue protein attached to proteins as an intracellular targeting signal).. It carries out the reaction ATP + H2O = ADP + phosphate + H(+). Forms an icosahedral capsid of pseudo T=3 symmetry with capsid proteins VP2 and VP3. Together they form an icosahedral capsid composed of 60 copies of each VP1, VP2, and VP3, with a diameter of approximately 325 Angstroms. VP4 lies on the inner surface of the protein shell formed by VP1, VP2 and VP3. All the three latter proteins contain a beta-sheet structure called beta-barrel jelly roll. VP1 is situated at the 12 fivefold axes, whereas VP2 and VP3 are located at the quasi-sixfold axes. Binds the host receptor ANTXR1 for attachment and uncoating (entry). Functionally, forms an icosahedral capsid of pseudo T=3 symmetry with capsid proteins VP2 and VP3. Together they form an icosahedral capsid composed of 60 copies of each VP1, VP2, and VP3, with a diameter of approximately 270 Angstroms. VP4 lies on the inner surface of the protein shell formed by VP1, VP2 and VP3. All the three latter proteins contain a beta-sheet structure called beta-barrel jelly roll. VP1 is situated at the 12 fivefold axes, whereas VP2 and VP3 are located at the quasi-sixfold axes. Binds the host receptor ANTXR1 for attachment and uncoating (entry). Its function is as follows. Forms an icosahedral capsid of pseudo T=3 symmetry with capsid proteins VP2 and VP3. Together they form an icosahedral capsid composed of 60 copies of each VP1, VP2, and VP3, with a diameter of approximately 270 Angstroms. VP4 lies on the inner surface of the protein shell formed by VP1, VP2 and VP3. All the three latter proteins contain a beta-sheet structure called beta-barrel jelly roll. VP1 is situated at the 12 fivefold axes, whereas VP2 and VP3 are located at the quasi-sixfold axes. Vp3 also seems to be involved in the binding to host receptor ANTXR1 for attachment and uncoating (entry). In terms of biological role, lies on the inner surface of the capsid shell. After binding to the host receptor, the capsid undergoes conformational changes. Capsid protein VP4 is released, capsid protein VP1 N-terminus is externalized, and together, they shape a pore in the host membrane through which the viral genome is translocated into the host cell cytoplasm. After genome has been released, the channel shrinks. VP0 precursor is a component of immature procapsids. Functionally, mediates self-processing of the polyprotein by a translational effect termed 'ribosome skipping'. Mechanistically, 2A-mediated cleavage occurs between the C-terminal glycine and the proline of the downstream protein 2B. Its function is as follows. Plays an essential role in the virus replication cycle by acting as a viroporin. Creates a pore in the host endoplasmic reticulum and as a consequence releases Ca2+ in the cytoplasm of infected cell. In turn, high levels of cytoplasmic calcium may trigger membrane trafficking and transport of viral ER-associated proteins to viroplasms, sites of viral genome replication. In terms of biological role, associates with and induces structural rearrangements of intracellular membranes. Covalently linked to the 5'-end of both the positive-strand and negative-strand genomic RNAs. Acts as a genome-linked replication primer. Functionally, cysteine protease that generates mature viral proteins from the precursor polyprotein. Inactivates crucial host adapter molecules in order to suppress antiviral type-I interferon (type-I IFN) and NF-kappaB production to escape host antiviral innate immune responses. Deubiquitinase that acts on both lysine-48- and lysine-63-linked polyubiquitin chains and inhibits the ubiquitination of the ATP-dependent RNA helicase RIGI, TANK-binding kinase 1 (TBK1), and TNF receptor-associated factor 3 (TRAF3), thereby blocking the expression of IFN-beta and IFN stimulated gene 54 (ISG54). Induces host IRF3 and IRF7 degradation thereby suppressing IRF3- and IRF7-induced type-I IFN production. Also decreases host IRF3 phosphorylation leading to negligible IRF3 activation. Cleaves host MAVS, TRIF and TANK, which are then unable to regulate pattern recognition receptor (PRR)-mediated type-I IFN production. Inhibits the integrated stress response (ISR) in the infected cell by disrupting eIF4GI-G3BP1 interaction. Stress granule formation is thus inhibited. Its function is as follows. Replicates the genomic and antigenomic RNAs by recognizing replications specific signals. Performs VPg uridylylation. The protein is Genome polyprotein of Sus scrofa (Pig).